The sequence spans 214 residues: Transmembrane emp24 domain-containing protein p24delta10 (214 aa).

The signal sequence occupies residues 1–24; sequence MFLQSQKLWTMLLILAIWSPISHS. Over 25-181 the chain is Lumenal; it reads LHFDLHSGRT…QDLNRSTNTK (157 aa). Positions 34–149 constitute a GOLD domain; it reads TKCIAEDIKS…VEVMEFEVKS (116 aa). Residues 164–177 adopt a coiled-coil conformation; it reads LRDREEEMQDLNRS. Omega-N-methylated arginine is present on arginine 167. Asparagine 175 carries N-linked (GlcNAc...) asparagine glycosylation. A helical membrane pass occupies residues 182–202; that stretch reads MAWLSVLSFFVCIGVAGMQFL. At 203–214 the chain is on the cytoplasmic side; that stretch reads HLKTFFEKKKVI. The COPII vesicle coat-binding motif lies at 207-208; the sequence is FF. The short motif at 207-214 is the COPI vesicle coat-binding element; the sequence is FFEKKKVI.

The protein belongs to the EMP24/GP25L family. Probably oligomerizes with other members of the EMP24/GP25L family. Associates with the COPI vesicle coat (coatomer). Associates with the COPII vesicle coat (coatomer).

The protein localises to the endoplasmic reticulum membrane. It localises to the golgi apparatus. It is found in the cis-Golgi network membrane. The protein resides in the golgi stack membrane. In terms of biological role, involved in vesicular protein trafficking. Mainly functions in the early secretory pathway. Thought to act as cargo receptor at the lumenal side for incorporation of secretory cargo molecules into transport vesicles and to be involved in vesicle coat formation at the cytoplasmic side. The chain is Transmembrane emp24 domain-containing protein p24delta10 from Arabidopsis thaliana (Mouse-ear cress).